We begin with the raw amino-acid sequence, 577 residues long: Sulfite reductase [NADPH] hemoprotein beta-component (577 aa).

Positions 441, 447, 486, and 490 each coordinate [4Fe-4S] cluster. A siroheme-binding site is contributed by Cys-490.

Belongs to the nitrite and sulfite reductase 4Fe-4S domain family. As to quaternary structure, alpha(8)-beta(8). The alpha component is a flavoprotein, the beta component is a hemoprotein. It depends on siroheme as a cofactor. [4Fe-4S] cluster serves as cofactor.

It carries out the reaction hydrogen sulfide + 3 NADP(+) + 3 H2O = sulfite + 3 NADPH + 4 H(+). The protein operates within sulfur metabolism; hydrogen sulfide biosynthesis; hydrogen sulfide from sulfite (NADPH route): step 1/1. Its function is as follows. Component of the sulfite reductase complex that catalyzes the 6-electron reduction of sulfite to sulfide. This is one of several activities required for the biosynthesis of L-cysteine from sulfate. This chain is Sulfite reductase [NADPH] hemoprotein beta-component, found in Pectobacterium atrosepticum (strain SCRI 1043 / ATCC BAA-672) (Erwinia carotovora subsp. atroseptica).